Here is a 517-residue protein sequence, read N- to C-terminus: Nicotine N-demethylase CYP82E4 (517 aa).

Residues 2-22 (LSPIEAIVGLVTFTFLFYFLW) form a helical membrane-spanning segment. Lysine 254 participates in a covalent cross-link: Glycyl lysine isopeptide (Lys-Gly) (interchain with G-Cter in ubiquitin). Cysteine 457 lines the heme pocket.

The protein belongs to the cytochrome P450 family. CYP82E2 subfamily. Requires heme as cofactor. In terms of tissue distribution, expressed in leaves.

The protein resides in the membrane. The catalysed reaction is (S)-nicotine + reduced [NADPH--hemoprotein reductase] + O2 = (S)-nornicotine + formaldehyde + oxidized [NADPH--hemoprotein reductase] + H2O + H(+). It functions in the pathway alkaloid biosynthesis; nicotine biosynthesis. In terms of biological role, involved in the biosynthesis of pyridine alkaloid natural products, leading mainly to the production of anabasine, anatabine, nicotine and nornicotine, effective deterrents against herbivores with antiparasitic and pesticide properties (neurotoxins); nornicotine serves as the precursor in the synthesis of the carcinogen compound N'-nitrosonornicotine (NNN). Catalyzes the demethylation of nicotine to form nornicotine. The sequence is that of Nicotine N-demethylase CYP82E4 from Nicotiana tomentosiformis (Tobacco).